Here is a 274-residue protein sequence, read N- to C-terminus: Orotidine 5'-phosphate decarboxylase (274 aa).

Lys-95 acts as the Proton donor in catalysis.

Belongs to the OMP decarboxylase family. Type 2 subfamily.

The catalysed reaction is orotidine 5'-phosphate + H(+) = UMP + CO2. It functions in the pathway pyrimidine metabolism; UMP biosynthesis via de novo pathway; UMP from orotate: step 2/2. The protein is Orotidine 5'-phosphate decarboxylase of Mycobacterium avium (strain 104).